A 349-amino-acid polypeptide reads, in one-letter code: Ferredoxin--NADP reductase 1 (349 aa).

7 residues coordinate FAD: E36, K44, Y48, I88, L123, D290, and S331.

The protein belongs to the ferredoxin--NADP reductase type 2 family. Homodimer. FAD is required as a cofactor.

It carries out the reaction 2 reduced [2Fe-2S]-[ferredoxin] + NADP(+) + H(+) = 2 oxidized [2Fe-2S]-[ferredoxin] + NADPH. This is Ferredoxin--NADP reductase 1 from Bacillus thuringiensis (strain Al Hakam).